The following is a 92-amino-acid chain: Acylphosphatase (92 aa).

The 88-residue stretch at 5–92 (QVQLFVRGRV…GDFFDFRITD (88 aa)) folds into the Acylphosphatase-like domain. Catalysis depends on residues Arg20 and Asn38.

Belongs to the acylphosphatase family.

It carries out the reaction an acyl phosphate + H2O = a carboxylate + phosphate + H(+). This Sorangium cellulosum (strain So ce56) (Polyangium cellulosum (strain So ce56)) protein is Acylphosphatase (acyP).